The following is a 1249-amino-acid chain: Myosin-1 (1249 aa).

The interval 1–42 is disordered; sequence MGHSRRPAGGEKKSRGFGRSKAVADVGDGRQTGGKPQVKKAT. The 680-residue stretch at 51–730 folds into the Myosin motor domain; the sequence is IGVSDLTLLS…TLFALEAMRD (680 aa). Residue 144–151 coordinates ATP; sequence GESGAGKT. The residue at position 372 (Ser372) is a Phosphoserine. Positions 419–501 are actin-binding; sequence SIGILDIYGF…PGVFAALNDA (83 aa). IQ domains lie at 734 to 754 and 755 to 780; these read HNMA…RTEC and AIRI…QGHQ. The 191-residue stretch at 788–978 folds into the TH1 domain; that stretch reads RRRMSLLGSR…TIHTGPGEPA (191 aa). Disordered regions lie at residues 962–1079 and 1126–1249; these read DDSY…PKKP and WTPE…DDDW. Residues 1021 to 1035 show a composition bias toward pro residues; it reads AAQPLPRATPQPAEP. The segment covering 1036–1051 has biased composition (low complexity); it reads QPAARAVPQPVAAVAA. 2 stretches are compositionally biased toward pro residues: residues 1064–1077 and 1139–1150; these read APPP…PAPK and TPKPAPPPPPAA. One can recognise an SH3 domain in the interval 1076–1137; it reads PKKPTAKVLY…PEAYLEEQVA (62 aa). Residues 1151–1169 are compositionally biased toward low complexity; that stretch reads PRSTPAPATNGAAAAAKAK. Residues 1200 to 1221 show a composition bias toward polar residues; the sequence is VSMNSHDSSGGSGRGTPNSMSN. Positions 1222–1231 are enriched in low complexity; it reads ASLAGGLAEA.

Belongs to the TRAFAC class myosin-kinesin ATPase superfamily. Myosin family. Phosphorylation of the TEDS site (Ser-372) is required for the polarization of the actin cytoskeleton. Phosphorylation probably activates the myosin-I ATPase activity.

It localises to the cytoplasm. Its subcellular location is the cytoskeleton. It is found in the actin patch. Type-I myosin implicated in the organization of the actin cytoskeleton. Required for proper actin cytoskeleton polarization. At the cell cortex, assembles in patch-like structures together with proteins from the actin-polymerizing machinery and promotes actin assembly. Functions as actin nucleation-promoting factor (NPF) for the Arp2/3 complex. Plays an important role in polarized growth, spore germination, hyphal morphogenesis, and septal wall formation. The polypeptide is Myosin-1 (myoA) (Aspergillus fumigatus (strain ATCC MYA-4609 / CBS 101355 / FGSC A1100 / Af293) (Neosartorya fumigata)).